A 324-amino-acid polypeptide reads, in one-letter code: DNA-directed RNA polymerase subunit alpha (324 aa).

The tract at residues 1–228 (MIEIQKPTIR…EHFNLFTDLS (228 aa)) is alpha N-terminal domain (alpha-NTD). The tract at residues 245–324 (RNKLLDMTIE…STPKGEEEEK (80 aa)) is alpha C-terminal domain (alpha-CTD).

This sequence belongs to the RNA polymerase alpha chain family. Homodimer. The RNAP catalytic core consists of 2 alpha, 1 beta, 1 beta' and 1 omega subunit. When a sigma factor is associated with the core the holoenzyme is formed, which can initiate transcription.

It carries out the reaction RNA(n) + a ribonucleoside 5'-triphosphate = RNA(n+1) + diphosphate. DNA-dependent RNA polymerase catalyzes the transcription of DNA into RNA using the four ribonucleoside triphosphates as substrates. The chain is DNA-directed RNA polymerase subunit alpha from Caldicellulosiruptor saccharolyticus (strain ATCC 43494 / DSM 8903 / Tp8T 6331).